A 1072-amino-acid chain; its full sequence is Guanylyl cyclase C (1072 aa).

The signal sequence occupies residues 1–19 (MTSLLGLAVRLLLFQPALM). The Extracellular segment spans residues 20–433 (VFWASQVRQN…VPGLGPQILM (414 aa)). N-linked (GlcNAc...) asparagine glycans are attached at residues N32, N75, N79, N179, N188, N195, N284, N307, N345, and N402. The helical transmembrane segment at 434–454 (IAVFTLTGILVVLLLIALLVL) threads the bilayer. The Cytoplasmic segment spans residues 455–1072 (RKYRRDHALR…NNSDHDSTYF (618 aa)). The region spanning 489 to 748 (LKIDDDRRRD…KIESTLAKIF (260 aa)) is the Protein kinase domain. The Guanylate cyclase domain occupies 823 to 953 (TIYFSDIVGF…DTVNTASRME (131 aa)).

The protein belongs to the adenylyl cyclase class-4/guanylyl cyclase family. As to quaternary structure, homotrimer. Interacts via its C-terminal region with NHERF4. Interacts with the lectin chaperone VIP36. Glycosylation at Asn-75 and/or Asn-79 is required for interaction with VIP36 while glycosylation at Asn-345 and Asn-402 modulates ligand-mediated GC-C activation.

Its subcellular location is the cell membrane. It is found in the endoplasmic reticulum membrane. It catalyses the reaction GTP = 3',5'-cyclic GMP + diphosphate. In terms of biological role, guanylyl cyclase that catalyzes synthesis of cyclic GMP (cGMP) from GTP. The protein is Guanylyl cyclase C (Gucy2c) of Mus musculus (Mouse).